Reading from the N-terminus, the 1030-residue chain is uncharacterized protein (1030 aa).

An SWIM-type zinc finger spans residues 51-86 (IKVSFTAKDGELTCKCSCLANVDNCVHIVAVLLKYH). The region spanning 590–751 (RGLEENKFGG…WSCFDFVLPS (162 aa)) is the Helicase ATP-binding domain. An ATP-binding site is contributed by 603-610 (DEMGLGKT). The DEAQ box motif lies at 702–705 (DEAQ). Residues 867–1021 (ALEIIHEAIE…EDVNFFESLT (155 aa)) enclose the Helicase C-terminal domain.

This sequence belongs to the SNF2/RAD54 helicase family.

This is an uncharacterized protein from Mycoplasma pneumoniae (strain ATCC 29342 / M129 / Subtype 1) (Mycoplasmoides pneumoniae).